Consider the following 427-residue polypeptide: 3-phosphoshikimate 1-carboxyvinyltransferase (427 aa).

Positions 20, 21, and 25 each coordinate 3-phosphoshikimate. A phosphoenolpyruvate-binding site is contributed by Lys20. Residues Gly92 and Arg120 each coordinate phosphoenolpyruvate. Residues Ser166, Gln168, Asp312, and Lys339 each contribute to the 3-phosphoshikimate site. Position 168 (Gln168) interacts with phosphoenolpyruvate. Asp312 (proton acceptor) is an active-site residue. 2 residues coordinate phosphoenolpyruvate: Arg343 and Arg385.

This sequence belongs to the EPSP synthase family. In terms of assembly, monomer.

Its subcellular location is the cytoplasm. It catalyses the reaction 3-phosphoshikimate + phosphoenolpyruvate = 5-O-(1-carboxyvinyl)-3-phosphoshikimate + phosphate. It functions in the pathway metabolic intermediate biosynthesis; chorismate biosynthesis; chorismate from D-erythrose 4-phosphate and phosphoenolpyruvate: step 6/7. In terms of biological role, catalyzes the transfer of the enolpyruvyl moiety of phosphoenolpyruvate (PEP) to the 5-hydroxyl of shikimate-3-phosphate (S3P) to produce enolpyruvyl shikimate-3-phosphate and inorganic phosphate. The protein is 3-phosphoshikimate 1-carboxyvinyltransferase of Streptococcus pneumoniae (strain Hungary19A-6).